Consider the following 520-residue polypeptide: Rho GTPase-activating protein gacV (520 aa).

Residues 8 to 28 (NIKTYYIIGIITLIFIVSAVI) form a helical membrane-spanning segment. Residues 28 to 192 (IKNQLSSSNQ…EEQEEEQFSM (165 aa)) are a coiled coil. 4 disordered regions span residues 33–73 (SSSN…KLDN), 121–189 (EEKQ…EEEQ), 348–373 (NNNNNNNNNNNNNNNNNNDNNNNNNE), and 489–520 (LQEQNDQEEDNQEEEKDNQEEDEDEEDKDQEE). Residues 52–62 (SKGRGNKKGKK) are compositionally biased toward basic residues. A compositionally biased stretch (basic and acidic residues) spans 63 to 73 (PEKIQEKKLDN). The span at 140–189 (QEEEEEEEEQQEIEEDEEEEEGQEQEEEEEQQEIEEGEEEQQEEEQEEEQ) shows a compositional bias: acidic residues. The Rho-GAP domain maps to 195-472 (VSIERLMDFQ…ILLKQKKEIA (278 aa)). The span at 348–372 (NNNNNNNNNNNNNNNNNNDNNNNNN) shows a compositional bias: low complexity. The stretch at 480 to 520 (YFKDEYSKKLQEQNDQEEDNQEEEKDNQEEDEDEEDKDQEE) forms a coiled coil. Positions 493-520 (NDQEEDNQEEEKDNQEEDEDEEDKDQEE) are enriched in acidic residues.

It is found in the membrane. In terms of biological role, rho GTPase-activating protein involved in the signal transduction pathway. The chain is Rho GTPase-activating protein gacV (gacV) from Dictyostelium discoideum (Social amoeba).